The primary structure comprises 441 residues: UDP-N-acetylmuramoylalanine--D-glutamate ligase (441 aa).

112-118 contributes to the ATP binding site; it reads GTNGKTT.

The protein belongs to the MurCDEF family.

The protein localises to the cytoplasm. The catalysed reaction is UDP-N-acetyl-alpha-D-muramoyl-L-alanine + D-glutamate + ATP = UDP-N-acetyl-alpha-D-muramoyl-L-alanyl-D-glutamate + ADP + phosphate + H(+). It functions in the pathway cell wall biogenesis; peptidoglycan biosynthesis. Cell wall formation. Catalyzes the addition of glutamate to the nucleotide precursor UDP-N-acetylmuramoyl-L-alanine (UMA). This is UDP-N-acetylmuramoylalanine--D-glutamate ligase from Gloeobacter violaceus (strain ATCC 29082 / PCC 7421).